A 128-amino-acid polypeptide reads, in one-letter code: MISSANNKGAGTSRRKLRSEKAALQFSVSRVEYSLKKGRYCRRLGATAPVYLAAVLENLVAEVLEMAANVTEKHKRIVIKPRHIMLAVRNDVEVNKLFHGVTISASGVVPKTRKELDRRKRRSTSQAD.

Belongs to the histone H2A family. The nucleosome is a histone octamer containing two molecules each of H2A, H2B, H3 and H4 assembled in one H3-H4 heterotetramer and two H2A-H2B heterodimers. The octamer wraps approximately 147 bp of DNA. As to expression, expressed in the generative cell within the bicellular pollen. Not detected in other reproductive or vegetative tissues.

The protein resides in the nucleus. The protein localises to the chromosome. Core component of nucleosome. Nucleosomes wrap and compact DNA into chromatin, limiting DNA accessibility to the cellular machineries which require DNA as a template. Histones thereby play a central role in transcription regulation, DNA repair, DNA replication and chromosomal stability. DNA accessibility is regulated via a complex set of post-translational modifications of histones, also called histone code, and nucleosome remodeling. May be involved in the repression of gene expression in male gametes. In Lilium longiflorum (Trumpet lily), this protein is Histone H2A.2 (gH2A).